The primary structure comprises 353 residues: Photosystem II protein D1 (353 aa).

Threonine 2 is subject to N-acetylthreonine. Threonine 2 carries the post-translational modification Phosphothreonine. 3 consecutive transmembrane segments (helical) span residues 29–46 (YIGW…TATA), 118–133 (HFLL…EWEL), and 142–156 (WIAV…AAAA). Position 118 (histidine 118) interacts with chlorophyll a. Residue tyrosine 126 coordinates pheophytin a. Residues aspartate 170 and glutamate 189 each contribute to the [CaMn4O5] cluster site. A helical transmembrane segment spans residues 197 to 218 (FHMLGVAGVFGGSLFSAMHGSL). Histidine 198 contributes to the chlorophyll a binding site. Residues histidine 215 and 264–265 (SF) contribute to the a quinone site. A Fe cation-binding site is contributed by histidine 215. A Fe cation-binding site is contributed by histidine 272. Residues 274-288 (FLAAWPVVGIWFTAL) form a helical membrane-spanning segment. The [CaMn4O5] cluster site is built by histidine 332, glutamate 333, aspartate 342, and alanine 344. The propeptide occupies 345 to 353 (SVEAPSVNG).

It belongs to the reaction center PufL/M/PsbA/D family. As to quaternary structure, PSII is composed of 1 copy each of membrane proteins PsbA, PsbB, PsbC, PsbD, PsbE, PsbF, PsbH, PsbI, PsbJ, PsbK, PsbL, PsbM, PsbT, PsbX, PsbY, PsbZ, Psb30/Ycf12, at least 3 peripheral proteins of the oxygen-evolving complex and a large number of cofactors. It forms dimeric complexes. Requires The D1/D2 heterodimer binds P680, chlorophylls that are the primary electron donor of PSII, and subsequent electron acceptors. It shares a non-heme iron and each subunit binds pheophytin, quinone, additional chlorophylls, carotenoids and lipids. D1 provides most of the ligands for the Mn4-Ca-O5 cluster of the oxygen-evolving complex (OEC). There is also a Cl(-1) ion associated with D1 and D2, which is required for oxygen evolution. The PSII complex binds additional chlorophylls, carotenoids and specific lipids. as cofactor. Tyr-161 forms a radical intermediate that is referred to as redox-active TyrZ, YZ or Y-Z. In terms of processing, C-terminally processed by CTPA; processing is essential to allow assembly of the oxygen-evolving complex and thus photosynthetic growth.

The protein resides in the plastid. The protein localises to the chloroplast thylakoid membrane. The catalysed reaction is 2 a plastoquinone + 4 hnu + 2 H2O = 2 a plastoquinol + O2. Photosystem II (PSII) is a light-driven water:plastoquinone oxidoreductase that uses light energy to abstract electrons from H(2)O, generating O(2) and a proton gradient subsequently used for ATP formation. It consists of a core antenna complex that captures photons, and an electron transfer chain that converts photonic excitation into a charge separation. The D1/D2 (PsbA/PsbD) reaction center heterodimer binds P680, the primary electron donor of PSII as well as several subsequent electron acceptors. The chain is Photosystem II protein D1 from Huperzia lucidula (Shining clubmoss).